The chain runs to 161 residues: Phosphopantetheine adenylyltransferase (161 aa).

Ser-9 is a substrate binding site. ATP-binding positions include 9–10 (SF) and His-17. Residues Lys-41, Thr-73, and Arg-87 each coordinate substrate. Residues 88-90 (GIR), Glu-98, and 123-129 (YQYVSSS) each bind ATP.

The protein belongs to the bacterial CoaD family. As to quaternary structure, homohexamer. Requires Mg(2+) as cofactor.

Its subcellular location is the cytoplasm. The catalysed reaction is (R)-4'-phosphopantetheine + ATP + H(+) = 3'-dephospho-CoA + diphosphate. It functions in the pathway cofactor biosynthesis; coenzyme A biosynthesis; CoA from (R)-pantothenate: step 4/5. Reversibly transfers an adenylyl group from ATP to 4'-phosphopantetheine, yielding dephospho-CoA (dPCoA) and pyrophosphate. This Levilactobacillus brevis (strain ATCC 367 / BCRC 12310 / CIP 105137 / JCM 1170 / LMG 11437 / NCIMB 947 / NCTC 947) (Lactobacillus brevis) protein is Phosphopantetheine adenylyltransferase.